The chain runs to 475 residues: MTKWLSISDVKEKIAATSAEEVTASYLELIDKSSINGYTCTSDGALDTAKMVDKGEVAGPLAGVPIAIKDNISTKGLATTCSSKILEGYVPPYDAHVIERLKEAGAVIIGKTNMDEFAMGTSTESSCYGVTLNPWDHERVPGGSSGGSAAVVAAGEAPISLGSDTGGSVRCPAAFCGVVGLKPTYGAVSRYGLISYANSLEQIGPMATCVEDIAAVMDVIGGYDARDSTSIDKKIDHQAALIDDVKGLKIGVPDEYFGEGVDSGTENAVWDAINKYEEMDASWEKVSMPNTKYALAAYYTIAMSEASSNLARFDGTRYGPRNDGENWHVMASKTRAENFGKEVQRRILLGTYALSAGYQDKYYLKALQVRTLVKQDFDRAFANFDVLMAPTMPLPAFKIGEMVEDPLSQYLIDVNTVPMNLAGVPCISVPCGSSDGLPVGLQIIGNHFDEAALIRAAYSFEKNTDHHKARPGEVA.

Residues Lys69 and Ser144 each act as charge relay system in the active site. Ser168 (acyl-ester intermediate) is an active-site residue.

It belongs to the amidase family. GatA subfamily. In terms of assembly, heterotrimer of A, B and C subunits.

The enzyme catalyses L-glutamyl-tRNA(Gln) + L-glutamine + ATP + H2O = L-glutaminyl-tRNA(Gln) + L-glutamate + ADP + phosphate + H(+). Its function is as follows. Allows the formation of correctly charged Gln-tRNA(Gln) through the transamidation of misacylated Glu-tRNA(Gln) in organisms which lack glutaminyl-tRNA synthetase. The reaction takes place in the presence of glutamine and ATP through an activated gamma-phospho-Glu-tRNA(Gln). The polypeptide is Glutamyl-tRNA(Gln) amidotransferase subunit A (Methanococcoides burtonii (strain DSM 6242 / NBRC 107633 / OCM 468 / ACE-M)).